A 191-amino-acid chain; its full sequence is Probable DNA-directed RNA polymerase subunit delta (191 aa).

The HTH HARE-type domain maps to 14–83; that stretch reads LSMIEVARAI…GENKWGLRSW (70 aa). The disordered stretch occupies residues 119–191; sequence EDAIDYRDDD…EDEEDEEPVL (73 aa).

In terms of assembly, RNAP is composed of a core of 2 alpha, a beta and a beta' subunits. The core is associated with a delta subunit and one of several sigma factors.

Its function is as follows. Participates in both the initiation and recycling phases of transcription. In the presence of the delta subunit, RNAP displays an increased specificity of transcription, a decreased affinity for nucleic acids, and an increased efficiency of RNA synthesis because of enhanced recycling. In Streptococcus pyogenes serotype M6 (strain ATCC BAA-946 / MGAS10394), this protein is Probable DNA-directed RNA polymerase subunit delta.